Reading from the N-terminus, the 220-residue chain is Thiopurine S-methyltransferase (220 aa).

4 residues coordinate S-adenosyl-L-methionine: Trp10, Leu45, Glu66, and Arg123.

It belongs to the class I-like SAM-binding methyltransferase superfamily. TPMT family.

It localises to the cytoplasm. It catalyses the reaction S-adenosyl-L-methionine + a thiopurine = S-adenosyl-L-homocysteine + a thiopurine S-methylether.. This Pseudomonas syringae pv. tomato (strain ATCC BAA-871 / DC3000) protein is Thiopurine S-methyltransferase.